The sequence spans 434 residues: Putative ankyrin repeat protein FPV023 (434 aa).

ANK repeat units lie at residues 33–62 (RLKILLHKAIELRNIEAVRLLLNNDVDPVA), 134–163 (LTISRMEPSRQIEEIQIMDILLSKGIDINF), 167–197 (IGNTALHYACDYRNGLNMVRHLIKNGADINI), 201–230 (YGTTPLACAVSTRNIELVSILLDSGADPNS), 236–265 (IGTKVLHTAVGSGNFNIAKELIESGADPNI), 269–299 (AGVTPLHVAAIDEDSYALLELLLDNGADPNI), and 303–330 (NGTTPLFQAMHNYNRVKLLFMYGADINI).

In Fowlpox virus (strain NVSL) (FPV), this protein is Putative ankyrin repeat protein FPV023.